The sequence spans 540 residues: Pentatricopeptide repeat-containing protein At1g80880, mitochondrial (540 aa).

The transit peptide at 1–87 (MAAIVAIGRK…ETFDINLTAL (87 aa)) directs the protein to the mitochondrion. 10 PPR repeats span residues 154-184 (DQKS…MFNV), 188-222 (TRKA…KHTP), 223-253 (YDEA…SKKL), 257-292 (DVEG…CITP), 293-327 (NKDS…GLAP), 328-362 (GIEV…GLKP), 363-397 (DSVT…NLSP), 402-428 (FHAF…DLGP), 429-463 (TEET…EIVA), and 464-498 (NPAL…GFVG). The segment at 514 to 540 (VRKSKRMNLQKVGSQEGYKGQRSVDRK) is disordered.

Belongs to the PPR family. P subfamily.

The protein localises to the mitochondrion. The polypeptide is Pentatricopeptide repeat-containing protein At1g80880, mitochondrial (Arabidopsis thaliana (Mouse-ear cress)).